Here is a 292-residue protein sequence, read N- to C-terminus: Ribosomal RNA small subunit methyltransferase A (292 aa).

S-adenosyl-L-methionine-binding residues include Asn-28, Leu-30, Gly-55, Glu-76, Asp-101, and Asn-126.

The protein belongs to the class I-like SAM-binding methyltransferase superfamily. rRNA adenine N(6)-methyltransferase family. RsmA subfamily.

The protein localises to the cytoplasm. The enzyme catalyses adenosine(1518)/adenosine(1519) in 16S rRNA + 4 S-adenosyl-L-methionine = N(6)-dimethyladenosine(1518)/N(6)-dimethyladenosine(1519) in 16S rRNA + 4 S-adenosyl-L-homocysteine + 4 H(+). Functionally, specifically dimethylates two adjacent adenosines (A1518 and A1519) in the loop of a conserved hairpin near the 3'-end of 16S rRNA in the 30S particle. May play a critical role in biogenesis of 30S subunits. The sequence is that of Ribosomal RNA small subunit methyltransferase A from Bacillus anthracis.